The following is a 264-amino-acid chain: Thymidylate synthase (264 aa).

R21 provides a ligand contact to dUMP. H51 serves as a coordination point for (6R)-5,10-methylene-5,6,7,8-tetrahydrofolate. Residue 126–127 (RR) coordinates dUMP. C146 acts as the Nucleophile in catalysis. Residues 166–169 (RSCD), N177, and 207–209 (HLY) each bind dUMP. Residue D169 participates in (6R)-5,10-methylene-5,6,7,8-tetrahydrofolate binding. A263 is a (6R)-5,10-methylene-5,6,7,8-tetrahydrofolate binding site.

Belongs to the thymidylate synthase family. Bacterial-type ThyA subfamily. In terms of assembly, homodimer.

The protein localises to the cytoplasm. It catalyses the reaction dUMP + (6R)-5,10-methylene-5,6,7,8-tetrahydrofolate = 7,8-dihydrofolate + dTMP. It functions in the pathway pyrimidine metabolism; dTTP biosynthesis. Functionally, catalyzes the reductive methylation of 2'-deoxyuridine-5'-monophosphate (dUMP) to 2'-deoxythymidine-5'-monophosphate (dTMP) while utilizing 5,10-methylenetetrahydrofolate (mTHF) as the methyl donor and reductant in the reaction, yielding dihydrofolate (DHF) as a by-product. This enzymatic reaction provides an intracellular de novo source of dTMP, an essential precursor for DNA biosynthesis. This Salmonella typhi protein is Thymidylate synthase.